The sequence spans 203 residues: Shikimate kinase (203 aa).

32–37 (GAGKTA) serves as a coordination point for ATP. T36 contributes to the Mg(2+) binding site. Substrate-binding residues include D54, R78, and G100. An ATP-binding site is contributed by R138. Substrate is bound at residue R157.

It belongs to the shikimate kinase family. Monomer. The cofactor is Mg(2+).

Its subcellular location is the cytoplasm. The catalysed reaction is shikimate + ATP = 3-phosphoshikimate + ADP + H(+). The protein operates within metabolic intermediate biosynthesis; chorismate biosynthesis; chorismate from D-erythrose 4-phosphate and phosphoenolpyruvate: step 5/7. In terms of biological role, catalyzes the specific phosphorylation of the 3-hydroxyl group of shikimic acid using ATP as a cosubstrate. This is Shikimate kinase from Mesorhizobium japonicum (strain LMG 29417 / CECT 9101 / MAFF 303099) (Mesorhizobium loti (strain MAFF 303099)).